A 407-amino-acid chain; its full sequence is Phosphopentomutase (407 aa).

The Mn(2+) site is built by D10, D306, H311, D347, H348, and H359.

It belongs to the phosphopentomutase family. Mn(2+) is required as a cofactor.

The protein localises to the cytoplasm. It catalyses the reaction 2-deoxy-alpha-D-ribose 1-phosphate = 2-deoxy-D-ribose 5-phosphate. The catalysed reaction is alpha-D-ribose 1-phosphate = D-ribose 5-phosphate. Its pathway is carbohydrate degradation; 2-deoxy-D-ribose 1-phosphate degradation; D-glyceraldehyde 3-phosphate and acetaldehyde from 2-deoxy-alpha-D-ribose 1-phosphate: step 1/2. Isomerase that catalyzes the conversion of deoxy-ribose 1-phosphate (dRib-1-P) and ribose 1-phosphate (Rib-1-P) to deoxy-ribose 5-phosphate (dRib-5-P) and ribose 5-phosphate (Rib-5-P), respectively. In Yersinia pseudotuberculosis serotype O:1b (strain IP 31758), this protein is Phosphopentomutase.